The primary structure comprises 452 residues: Eukaryotic translation initiation factor 3 subunit E (452 aa).

A compositionally biased stretch (polar residues) spans 1-17 (MADNTPTTANDLLNDAT). The disordered stretch occupies residues 1–23 (MADNTPTTANDLLNDATQAAAKS). A PCI domain is found at 246 to 426 (PFFNHEPARD…GTVVMNHPPS (181 aa)).

The protein belongs to the eIF-3 subunit E family. As to quaternary structure, component of the eukaryotic translation initiation factor 3 (eIF-3) complex.

The protein localises to the cytoplasm. In terms of biological role, component of the eukaryotic translation initiation factor 3 (eIF-3) complex, which is involved in protein synthesis of a specialized repertoire of mRNAs and, together with other initiation factors, stimulates binding of mRNA and methionyl-tRNAi to the 40S ribosome. The eIF-3 complex specifically targets and initiates translation of a subset of mRNAs involved in cell proliferation. This chain is Eukaryotic translation initiation factor 3 subunit E (int6), found in Botryotinia fuckeliana (strain B05.10) (Noble rot fungus).